Here is a 650-residue protein sequence, read N- to C-terminus: Secretin OutD (650 aa).

Positions 1 to 18 (MLLLSGSVLLMASSLAWS) are cleaved as a signal peptide. An N0 region spans residues 20–115 (EFSASFKGTD…LATDRQPGIG (96 aa)). The N1 stretch occupies residues 117–181 (EVVTRVVPVN…TIVERVDQTG (65 aa)). Positions 182–255 (DRNVTTIPLS…MVKQLDRQQA (74 aa)) are N2. The N3 stretch occupies residues 258–330 (GNTKVIYLKY…DLEQVIAQLD (73 aa)). Residues 335 to 585 (QVLVEAIIAE…LFIRPSIIRD (251 aa)) form a secretin region. Residues 587–650 (SQFQSASASK…IVAFYPAGGK (64 aa)) form a s domain region.

The protein belongs to the bacterial secretin family. GSP D subfamily. As to quaternary structure, forms a cylindrical channel with 15 subunits.

Its subcellular location is the cell outer membrane. Functionally, involved in a type II secretion system (T2SS, formerly general secretion pathway, GSP) for the export of proteins. Required for the translocation of the multiple pectic enzymes. This subunit forms the outer membrane channel. The chain is Secretin OutD (outD) from Pectobacterium carotovorum subsp. carotovorum (Erwinia carotovora subsp. carotovora).